We begin with the raw amino-acid sequence, 489 residues long: DNA-directed RNA polymerase subunit beta' C-terminal section (489 aa).

Residues Asp-208, Asp-210, and Asp-212 each contribute to the Mg(2+) site.

Belongs to the RNA polymerase beta' chain family. RpoC1 subfamily. In plastids the minimal PEP RNA polymerase catalytic core is composed of four subunits: alpha, beta, beta', and beta''. When a (nuclear-encoded) sigma factor is associated with the core the holoenzyme is formed, which can initiate transcription. Mg(2+) is required as a cofactor.

The protein resides in the plastid. Its subcellular location is the chloroplast. The enzyme catalyses RNA(n) + a ribonucleoside 5'-triphosphate = RNA(n+1) + diphosphate. DNA-dependent RNA polymerase catalyzes the transcription of DNA into RNA using the four ribonucleoside triphosphates as substrates. The polypeptide is DNA-directed RNA polymerase subunit beta' C-terminal section (rpoC1B) (Chlamydomonas reinhardtii (Chlamydomonas smithii)).